The chain runs to 1028 residues: RNA cytidine acetyltransferase 2 (1028 aa).

Residues 286–295 (GRGKSAALGL) and Arg-458 contribute to the ATP site. Residues 546 to 729 (VLLGPVDESQ…FAPFYVSQIP (184 aa)) enclose the N-acetyltransferase domain. Residues 617-619 (IAV), 624-630 (MKMGYGS), and Lys-717 each bind acetyl-CoA. The disordered stretch occupies residues 982-1028 (SGIISVKSTKSENENGFDKSTKKRSSDKRSSSSSKSKSSKKRKSLKE). Over residues 990–1001 (TKSENENGFDKS) the composition is skewed to basic and acidic residues. Residues 1018–1028 (KSSKKRKSLKE) show a composition bias toward basic residues.

This sequence belongs to the RNA cytidine acetyltransferase family. NAT10 subfamily.

The protein resides in the nucleus. Its subcellular location is the nucleolus. The enzyme catalyses a cytidine in 18S rRNA + acetyl-CoA + ATP + H2O = an N(4)-acetylcytidine in 18S rRNA + ADP + phosphate + CoA + H(+). It carries out the reaction a cytidine in tRNA + acetyl-CoA + ATP + H2O = an N(4)-acetylcytidine in tRNA + ADP + phosphate + CoA + H(+). In terms of biological role, RNA cytidine acetyltransferase with specificity toward both 18S rRNA and tRNAs. Catalyzes the formation of N(4)-acetylcytidine (ac4C) in 18S rRNA. Required for early nucleolar cleavages of precursor rRNA at sites A0, A1 and A2 during 18S rRNA synthesis. Catalyzes the formation of ac4C in serine and leucine tRNAs. Requires a tRNA-binding adapter protein for full tRNA acetyltransferase activity but not for 18S rRNA acetylation. The polypeptide is RNA cytidine acetyltransferase 2 (Arabidopsis thaliana (Mouse-ear cress)).